Here is a 440-residue protein sequence, read N- to C-terminus: Cell division protein DivIB (440 aa).

Over residues 1 to 10 the composition is skewed to basic and acidic residues; sequence MMDDKTKNDQ. Disordered stretches follow at residues 1 to 97 and 123 to 154; these read MMDD…DSNI and QHQSAPNEQNSDSNDEETVTKKERKSKVTQLK. Residues 1–174 are Cytoplasmic-facing; sequence MMDDKTKNDQ…RRKRQKRIQY (174 aa). The span at 12 to 21 shows a compositional bias: acidic residues; sequence ESNEDKDELE. Positions 27–39 are enriched in basic residues; sequence TSKKRRQRKRSKA. A compositionally biased stretch (low complexity) spans 78 to 87; it reads DSASSHANDN. Positions 88 to 97 are enriched in acidic residues; sequence NIDDSTDSNI. The span at 124–134 shows a compositional bias: polar residues; sequence HQSAPNEQNSD. The chain crosses the membrane as a helical span at residues 175–195; sequence SVITILVLLIAVILIYMFSPL. The POTRA domain maps to 196–264; that stretch reads SKIAHVNING…NTLNVDITEN (69 aa). The Extracellular portion of the chain corresponds to 196-440; it reads SKIAHVNING…KINKQSSKNN (245 aa). The disordered stretch occupies residues 397–440; sequence YRGNTSTQSESDKNVTKSSQEENQAKEELQSVLNKINKQSSKNN. Residues 406 to 425 show a composition bias toward basic and acidic residues; that stretch reads ESDKNVTKSSQEENQAKEEL. Polar residues predominate over residues 427–440; it reads SVLNKINKQSSKNN.

The protein belongs to the FtsQ/DivIB family. DivIB subfamily.

The protein localises to the cell membrane. Its function is as follows. Cell division protein that may be involved in stabilizing or promoting the assembly of the division complex. This chain is Cell division protein DivIB, found in Staphylococcus aureus (strain MRSA252).